Reading from the N-terminus, the 959-residue chain is Alanine--tRNA ligase (959 aa).

Ser-389 carries the phosphoserine modification. Residues His-606, His-610, Cys-725, and His-729 each contribute to the Zn(2+) site.

The protein belongs to the class-II aminoacyl-tRNA synthetase family. In terms of assembly, monomer. Requires Zn(2+) as cofactor.

The protein localises to the mitochondrion. The protein resides in the cytoplasm. The enzyme catalyses tRNA(Ala) + L-alanine + ATP = L-alanyl-tRNA(Ala) + AMP + diphosphate. Functionally, catalyzes the attachment of alanine to tRNA(Ala) in a two-step reaction: alanine is first activated by ATP to form Ala-AMP and then transferred to the acceptor end of tRNA(Ala). Also edits incorrectly charged tRNA(Ala) via its editing domain. The chain is Alanine--tRNA ligase (ala1) from Schizosaccharomyces pombe (strain 972 / ATCC 24843) (Fission yeast).